The primary structure comprises 131 residues: Hydrogenase maturation factor HypA (131 aa).

His2 contributes to the Ni(2+) binding site. Cys74, Cys77, Cys91, and Cys94 together coordinate Zn(2+).

This sequence belongs to the HypA/HybF family.

Its function is as follows. Involved in the maturation of [NiFe] hydrogenases. Required for nickel insertion into the metal center of the hydrogenase. In Streptomyces avermitilis (strain ATCC 31267 / DSM 46492 / JCM 5070 / NBRC 14893 / NCIMB 12804 / NRRL 8165 / MA-4680), this protein is Hydrogenase maturation factor HypA.